Here is a 243-residue protein sequence, read N- to C-terminus: 7-cyano-7-deazaguanine synthase (243 aa).

ATP is bound at residue 18 to 28 (FSGGQDSATCL). Zn(2+) is bound by residues cysteine 206, cysteine 221, cysteine 224, and cysteine 227.

The protein belongs to the QueC family. Zn(2+) serves as cofactor.

It carries out the reaction 7-carboxy-7-deazaguanine + NH4(+) + ATP = 7-cyano-7-deazaguanine + ADP + phosphate + H2O + H(+). The protein operates within purine metabolism; 7-cyano-7-deazaguanine biosynthesis. Its function is as follows. Catalyzes the ATP-dependent conversion of 7-carboxy-7-deazaguanine (CDG) to 7-cyano-7-deazaguanine (preQ(0)). This chain is 7-cyano-7-deazaguanine synthase, found in Methylorubrum extorquens (strain PA1) (Methylobacterium extorquens).